The following is a 465-amino-acid chain: UDP-N-acetylmuramate--L-alanine ligase (465 aa).

112-118 is a binding site for ATP; the sequence is GTHGKTT.

It belongs to the MurCDEF family.

The protein localises to the cytoplasm. It carries out the reaction UDP-N-acetyl-alpha-D-muramate + L-alanine + ATP = UDP-N-acetyl-alpha-D-muramoyl-L-alanine + ADP + phosphate + H(+). The protein operates within cell wall biogenesis; peptidoglycan biosynthesis. Its function is as follows. Cell wall formation. In Burkholderia multivorans (strain ATCC 17616 / 249), this protein is UDP-N-acetylmuramate--L-alanine ligase.